Here is a 157-residue protein sequence, read N- to C-terminus: Ribosomal RNA large subunit methyltransferase H (157 aa).

S-adenosyl-L-methionine contacts are provided by residues Leu-73, Gly-104, and 121–126 (LSPLTL).

This sequence belongs to the RNA methyltransferase RlmH family. In terms of assembly, homodimer.

It localises to the cytoplasm. The enzyme catalyses pseudouridine(1915) in 23S rRNA + S-adenosyl-L-methionine = N(3)-methylpseudouridine(1915) in 23S rRNA + S-adenosyl-L-homocysteine + H(+). In terms of biological role, specifically methylates the pseudouridine at position 1915 (m3Psi1915) in 23S rRNA. This is Ribosomal RNA large subunit methyltransferase H from Acidithiobacillus ferrooxidans (strain ATCC 23270 / DSM 14882 / CIP 104768 / NCIMB 8455) (Ferrobacillus ferrooxidans (strain ATCC 23270)).